The following is a 335-amino-acid chain: Ferrochelatase (335 aa).

Fe cation contacts are provided by His207 and Glu288.

This sequence belongs to the ferrochelatase family.

It localises to the cytoplasm. It catalyses the reaction heme b + 2 H(+) = protoporphyrin IX + Fe(2+). It participates in porphyrin-containing compound metabolism; protoheme biosynthesis; protoheme from protoporphyrin-IX: step 1/1. Its function is as follows. Catalyzes the ferrous insertion into protoporphyrin IX. This is Ferrochelatase from Helicobacter pylori (strain J99 / ATCC 700824) (Campylobacter pylori J99).